The primary structure comprises 177 residues: 2-C-methyl-D-erythritol 2,4-cyclodiphosphate synthase (177 aa).

Positions 8 and 10 each coordinate a divalent metal cation. Residues 8–10 and 34–35 each bind 4-CDP-2-C-methyl-D-erythritol 2-phosphate; these read DVH and HS. A divalent metal cation is bound at residue His42. 4-CDP-2-C-methyl-D-erythritol 2-phosphate is bound by residues 56 to 58, 61 to 65, 132 to 135, Phe139, and Arg142; these read DIG, FPDTD, and TTEE.

It belongs to the IspF family. As to quaternary structure, homotrimer. The cofactor is a divalent metal cation.

The enzyme catalyses 4-CDP-2-C-methyl-D-erythritol 2-phosphate = 2-C-methyl-D-erythritol 2,4-cyclic diphosphate + CMP. Its pathway is isoprenoid biosynthesis; isopentenyl diphosphate biosynthesis via DXP pathway; isopentenyl diphosphate from 1-deoxy-D-xylulose 5-phosphate: step 4/6. In terms of biological role, involved in the biosynthesis of isopentenyl diphosphate (IPP) and dimethylallyl diphosphate (DMAPP), two major building blocks of isoprenoid compounds. Catalyzes the conversion of 4-diphosphocytidyl-2-C-methyl-D-erythritol 2-phosphate (CDP-ME2P) to 2-C-methyl-D-erythritol 2,4-cyclodiphosphate (ME-CPP) with a corresponding release of cytidine 5-monophosphate (CMP). This is 2-C-methyl-D-erythritol 2,4-cyclodiphosphate synthase from Agathobacter rectalis (strain ATCC 33656 / DSM 3377 / JCM 17463 / KCTC 5835 / VPI 0990) (Eubacterium rectale).